A 60-amino-acid chain; its full sequence is Large ribosomal subunit protein uL30 (60 aa).

Belongs to the universal ribosomal protein uL30 family. In terms of assembly, part of the 50S ribosomal subunit.

The polypeptide is Large ribosomal subunit protein uL30 (Cupriavidus metallidurans (strain ATCC 43123 / DSM 2839 / NBRC 102507 / CH34) (Ralstonia metallidurans)).